The chain runs to 514 residues: MQQLNPSEISEIIKGRIDKLDVTSQARNEGTVVSVSDGIVRIHGLADVMYGEMIEFPGGVYGMALNLEQDSVGAVVLGAYTTLAEGMSAKCTGRILEVPVGKELLGRVVDALGNPVDGKGPLNNTETDAVEKVAPGVIWRKSVDQPVQTGYKAVDAMIPVGRGQRELIIGDRQIGKTALAIDAIINQKNSGIFCVYVAIGQKQSTIANVVRKLEENGALANTIVVAASASESAALQFLAPYSGCTMGEFFRDRGEDALIVYDDLSKQAVAYRQISLLLRRPPGREAYPGDVFYLHSRLLERASRVSEEYVEKFTNGAVTGKTGSLTALPIIETQAGDVSAFVPTNVISITDGQIFLESAMFNSGIRPAVNAGVSVSRVGGAAQTKIIKKLSGGIRTALAQYRELAAFAQFASDLDEATRKQLEHGQRVTELMKQKQYAPMSIADMALSLYAAERGFLTDVEIAKIGSFEQALIAYFNRDHADLMAKINVKGDFNDEIDAGMKAGIEKFKATQTW.

170-177 (GDRQIGKT) is a binding site for ATP.

It belongs to the ATPase alpha/beta chains family. F-type ATPases have 2 components, CF(1) - the catalytic core - and CF(0) - the membrane proton channel. CF(1) has five subunits: alpha(3), beta(3), gamma(1), delta(1), epsilon(1). CF(0) has three main subunits: a(1), b(2) and c(9-12). The alpha and beta chains form an alternating ring which encloses part of the gamma chain. CF(1) is attached to CF(0) by a central stalk formed by the gamma and epsilon chains, while a peripheral stalk is formed by the delta and b chains.

It is found in the cell inner membrane. The catalysed reaction is ATP + H2O + 4 H(+)(in) = ADP + phosphate + 5 H(+)(out). Its function is as follows. Produces ATP from ADP in the presence of a proton gradient across the membrane. The alpha chain is a regulatory subunit. The sequence is that of ATP synthase subunit alpha from Pseudomonas syringae pv. tomato (strain ATCC BAA-871 / DC3000).